Reading from the N-terminus, the 139-residue chain is D-ribose pyranase (139 aa).

Residue His-20 is the Proton donor of the active site. Substrate is bound by residues Asp-28, His-106, and 128 to 130 (YAN).

Belongs to the RbsD / FucU family. RbsD subfamily. As to quaternary structure, homodecamer.

It localises to the cytoplasm. The enzyme catalyses beta-D-ribopyranose = beta-D-ribofuranose. It functions in the pathway carbohydrate metabolism; D-ribose degradation; D-ribose 5-phosphate from beta-D-ribopyranose: step 1/2. Functionally, catalyzes the interconversion of beta-pyran and beta-furan forms of D-ribose. In Aeromonas hydrophila subsp. hydrophila (strain ATCC 7966 / DSM 30187 / BCRC 13018 / CCUG 14551 / JCM 1027 / KCTC 2358 / NCIMB 9240 / NCTC 8049), this protein is D-ribose pyranase.